Reading from the N-terminus, the 587-residue chain is Integrator complex subunit 14 (587 aa).

In terms of domain architecture, VWFA spans Thr3–Asp113. Disordered regions lie at residues Lys190–Leu211 and Arg304–Asn331.

The protein belongs to the Integrator subunit 14 family. In terms of assembly, belongs to the multiprotein complex Integrator, at least composed of IntS1, IntS2, IntS3, IntS4, omd/IntS5, IntS6, defl/IntS7, IntS8, IntS9, IntS10, IntS11, IntS12, asun/IntS13, IntS14 and IntS15. The core complex associates with protein phosphatase 2A subunits mts/PP2A and Pp2A-29B, to form the Integrator-PP2A (INTAC) complex.

It is found in the nucleus. Functionally, component of the integrator complex, a multiprotein complex that terminates RNA polymerase II (Pol II) transcription in the promoter-proximal region of genes. The integrator complex provides a quality checkpoint during transcription elongation by driving premature transcription termination of transcripts that are unfavorably configured for transcriptional elongation: the complex terminates transcription by (1) catalyzing dephosphorylation of the C-terminal domain (CTD) of Pol II subunit Polr2A/Rbp1 and Spt5, and (2) degrading the exiting nascent RNA transcript via endonuclease activity. The integrator complex is also involved in the 3'-end processing of the U7 snRNA, and also the spliceosomal snRNAs U1, U2, U4 and U5. In Drosophila melanogaster (Fruit fly), this protein is Integrator complex subunit 14.